We begin with the raw amino-acid sequence, 483 residues long: Alginate biosynthesis protein AlgA (483 aa).

It belongs to the mannose-6-phosphate isomerase type 2 family. In terms of assembly, monomer. The cofactor is Co(2+).

It carries out the reaction D-mannose 6-phosphate = D-fructose 6-phosphate. The enzyme catalyses alpha-D-mannose 1-phosphate + GTP + H(+) = GDP-alpha-D-mannose + diphosphate. Its pathway is nucleotide-sugar biosynthesis; GDP-alpha-D-mannose biosynthesis; GDP-alpha-D-mannose from alpha-D-mannose 1-phosphate (GTP route): step 1/1. It participates in nucleotide-sugar biosynthesis; GDP-alpha-D-mannose biosynthesis; alpha-D-mannose 1-phosphate from D-fructose 6-phosphate: step 1/2. Functionally, produces a precursor for alginate polymerization. The alginate layer provides a protective barrier against host immune defenses and antibiotics. The polypeptide is Alginate biosynthesis protein AlgA (algA) (Pseudomonas syringae pv. tomato (strain ATCC BAA-871 / DC3000)).